Here is a 95-residue protein sequence, read N- to C-terminus: Cliotide T1 (95 aa).

The segment at residues 1-30 (GIPCGESCVFIPCITGAIGCSCKSKVCYRN) is a cross-link (cyclopeptide (Gly-Asn)). 3 disulfide bridges follow: cysteine 4–cysteine 20, cysteine 8–cysteine 22, and cysteine 13–cysteine 27. A propeptide spans 31-95 (HVIAAEAKTM…KDHLKMSITN (65 aa)) (removed in mature form).

In terms of processing, contains 3 disulfide bonds. Post-translationally, this is a cyclic peptide. In terms of tissue distribution, expressed in flower, stem, shoot, root, leaf, seed, pod and nodule (at protein level).

Functionally, probably participates in a plant defense mechanism. Active against Gram-negative bacteria E.coli ATCC 700926 (MIC=1.1 uM), K.pneumoniae ATTC 13883 (MIC=2.7 uM) and P.aeruginosa ATCC 39018 (MIC=4.7 uM). Has hemolytic and cytotoxic activity. The sequence is that of Cliotide T1 from Clitoria ternatea (Butterfly pea).